The following is a 362-amino-acid chain: Histidinol-phosphate aminotransferase (362 aa).

Position 218 is an N6-(pyridoxal phosphate)lysine (lysine 218).

It belongs to the class-II pyridoxal-phosphate-dependent aminotransferase family. Histidinol-phosphate aminotransferase subfamily. As to quaternary structure, homodimer. It depends on pyridoxal 5'-phosphate as a cofactor.

It carries out the reaction L-histidinol phosphate + 2-oxoglutarate = 3-(imidazol-4-yl)-2-oxopropyl phosphate + L-glutamate. It functions in the pathway amino-acid biosynthesis; L-histidine biosynthesis; L-histidine from 5-phospho-alpha-D-ribose 1-diphosphate: step 7/9. The protein is Histidinol-phosphate aminotransferase of Xanthomonas campestris pv. campestris (strain ATCC 33913 / DSM 3586 / NCPPB 528 / LMG 568 / P 25).